Here is a 200-residue protein sequence, read N- to C-terminus: Peptidyl-tRNA hydrolase (200 aa).

Residue Tyr15 participates in tRNA binding. The active-site Proton acceptor is the His20. Positions 66, 68, and 114 each coordinate tRNA.

This sequence belongs to the PTH family. Monomer.

It is found in the cytoplasm. The enzyme catalyses an N-acyl-L-alpha-aminoacyl-tRNA + H2O = an N-acyl-L-amino acid + a tRNA + H(+). Hydrolyzes ribosome-free peptidyl-tRNAs (with 1 or more amino acids incorporated), which drop off the ribosome during protein synthesis, or as a result of ribosome stalling. In terms of biological role, catalyzes the release of premature peptidyl moieties from peptidyl-tRNA molecules trapped in stalled 50S ribosomal subunits, and thus maintains levels of free tRNAs and 50S ribosomes. This chain is Peptidyl-tRNA hydrolase, found in Ralstonia pickettii (strain 12J).